Here is a 53-residue protein sequence, read N- to C-terminus: Small ribosomal subunit protein uS14 (53 aa).

4 residues coordinate Zn(2+): cysteine 17, cysteine 20, cysteine 36, and cysteine 39.

Belongs to the universal ribosomal protein uS14 family. Zinc-binding uS14 subfamily. In terms of assembly, part of the 30S ribosomal subunit. Requires Zn(2+) as cofactor.

Its function is as follows. Binds 16S rRNA, required for the assembly of 30S particles. In Methanococcus maripaludis (strain DSM 14266 / JCM 13030 / NBRC 101832 / S2 / LL), this protein is Small ribosomal subunit protein uS14.